Here is a 674-residue protein sequence, read N- to C-terminus: MRRPELIMRSLPLILFLSLGSFHLAAAAVDDQFTFDGFAGVNLTLDGTAVVTPGGLLMLTNGTTLLKGHAFYPSPLRFFHEATSGGGSSTVRSFSTAFVFGIVSEYADLSSPGLAFVVAKSRDFSSALQSQYMGLANARNNGNASNHFLAVELDTIVNAEFGDMSDNHVGIDVDGLASAAADDAGYHDDRTGAFVNMSLLSRAAARVWVDFDARTSLVNVTMAPLELPKPTTPLLSAAVNLSAVIEDEAYVGFSSSTGVVASRHYVLAWSFKMDGPAPSLNVSKLPALPVTIARAPSNVLKILLPIASAALVSALAIAVLVIHRRRRRYAELKEEWEVAFGPHRFSYKDLFRATNGFSDERLLGFGGFGRVYKGVLLVSRVEIAVKKVSHESRQGMKEFIAEVVSIGQLRHRNLVQLLGYCRQKGELLLVYDYMPNGSLDKYLYAENSKILSWAQRFRIIKGIASSILYLHEDWEQVVLHRDIKASNVLLDAEMNCRLGDFGLARLYDRGTDPHTTHVVGTIGYLAPELGHTGRPSKASDIFAFGVFMLEVTCGRRPVLQDTNGGQLLLVDMVLEHWRQGTVTDAVDPRLQGDFAVEEASLVLKLCLLCSHPLPSARPGIRQVVQLLDGAMPLPELSQAHLSCNMLALMQNQMGNSCSVASSVAGNISDIPRAR.

An N-terminal signal peptide occupies residues 1–27 (MRRPELIMRSLPLILFLSLGSFHLAAA). Residues 28 to 301 (AVDDQFTFDG…IARAPSNVLK (274 aa)) are Extracellular-facing. Positions 31 to 275 (DQFTFDGFAG…VLAWSFKMDG (245 aa)) are legume-lectin like. N-linked (GlcNAc...) asparagine glycans are attached at residues Asn-42, Asn-61, Asn-143, Asn-196, Asn-219, Asn-240, and Asn-281. The helical transmembrane segment at 302 to 322 (ILLPIASAALVSALAIAVLVI) threads the bilayer. Residues 323–674 (HRRRRRYAEL…GNISDIPRAR (352 aa)) lie on the Cytoplasmic side of the membrane. Positions 357 to 636 (FSDERLLGFG…LDGAMPLPEL (280 aa)) constitute a Protein kinase domain. ATP is bound by residues 363–371 (LGFGGFGRV) and Lys-386. Residue Asp-482 is the Proton acceptor of the active site. Phosphothreonine is present on residues Thr-511, Thr-515, Thr-516, and Thr-521.

In the C-terminal section; belongs to the protein kinase superfamily. Ser/Thr protein kinase family. This sequence in the N-terminal section; belongs to the leguminous lectin family. Interacts with B'KAPPA. Autophosphorylated at Thr-511, Thr-515 or Thr-516, and Thr-521 in response to salt stress. Dephosphorylated by phosphatase 2A in response to salt stress. In terms of tissue distribution, expressed in root epidermal cells.

It is found in the cell membrane. It carries out the reaction L-seryl-[protein] + ATP = O-phospho-L-seryl-[protein] + ADP + H(+). The enzyme catalyses L-threonyl-[protein] + ATP = O-phospho-L-threonyl-[protein] + ADP + H(+). Activated by autophosphorylation in response to salt stress. Lectin-domain containing receptor kinase involved in salt stress response. Acts as a negative regulator of salt tolerance. Mediates salt sensitivity by phosphorylating and activating MPK3 and MPK6. Promotes ethylene production and mediates salt-induced ethylene signaling. Promotes the accumulation of reactive oxygen species (ROS) under salt stress conditions. Its kinase activity is triggered by salt stress and is required for its function in salt stress response. Phosphorylates B'KAPPA, a B regulatory subunit of phosphatase 2A (PP2A). The polypeptide is L-type lectin-domain containing receptor kinase SIT1 (Oryza sativa subsp. japonica (Rice)).